A 349-amino-acid polypeptide reads, in one-letter code: Ion-translocating oxidoreductase complex subunit D (349 aa).

Helical transmembrane passes span 36-56 (CAFF…VALS), 77-99 (SAML…WMIV), and 124-144 (AMAA…TWIA). Thr-185 is modified (FMN phosphoryl threonine). A run of 5 helical transmembrane segments spans residues 212–232 (STGV…IVLL), 239–259 (WHIS…GFLL), 265–285 (ASPL…FIAT), 291–311 (ATSP…VYII), and 315–335 (GGYP…APFI).

This sequence belongs to the NqrB/RnfD family. The complex is composed of six subunits: RnfA, RnfB, RnfC, RnfD, RnfE and RnfG. FMN serves as cofactor.

The protein resides in the cell inner membrane. Part of a membrane-bound complex that couples electron transfer with translocation of ions across the membrane. The chain is Ion-translocating oxidoreductase complex subunit D from Shewanella oneidensis (strain ATCC 700550 / JCM 31522 / CIP 106686 / LMG 19005 / NCIMB 14063 / MR-1).